The following is a 369-amino-acid chain: Phosphatidylglycerol--prolipoprotein diacylglyceryl transferase (369 aa).

3 helical membrane passes run 26 to 46 (YYGILYATGILVAIIAGILTL), 60 to 80 (YVFIGIISIIFGARTWSFIIG), and 97 to 117 (LAIQGGVIFTITTGLIFFFFI). Arginine 167 contacts a 1,2-diacyl-sn-glycero-3-phospho-(1'-sn-glycerol). 2 consecutive transmembrane segments (helical) span residues 216–236 (VPIFLIESFFNVIAFIIIVFL) and 273–293 (FVTSIVTSVLFLLGGSIGFIF).

It belongs to the Lgt family.

Its subcellular location is the cell membrane. The catalysed reaction is L-cysteinyl-[prolipoprotein] + a 1,2-diacyl-sn-glycero-3-phospho-(1'-sn-glycerol) = an S-1,2-diacyl-sn-glyceryl-L-cysteinyl-[prolipoprotein] + sn-glycerol 1-phosphate + H(+). The protein operates within protein modification; lipoprotein biosynthesis (diacylglyceryl transfer). Functionally, catalyzes the transfer of the diacylglyceryl group from phosphatidylglycerol to the sulfhydryl group of the N-terminal cysteine of a prolipoprotein, the first step in the formation of mature lipoproteins. This is Phosphatidylglycerol--prolipoprotein diacylglyceryl transferase from Mycoplasmoides gallisepticum (strain R(low / passage 15 / clone 2)) (Mycoplasma gallisepticum).